The following is a 322-amino-acid chain: Breast cancer metastasis-suppressor 1-like protein (322 aa).

Residues 1-16 show a composition bias toward basic and acidic residues; that stretch reads MPVHSREKKESNHNDM. The interval 1 to 56 is disordered; sequence MPVHSREKKESNHNDMEVDYPENEGTSSEEDDSDSSSGSEEGDSSEMDDEDCERRR. Over residues 17 to 51 the composition is skewed to acidic residues; it reads EVDYPENEGTSSEEDDSDSSSGSEEGDSSEMDDED. Coiled-coil stretches lie at residues 50–82 and 147–178; these read EDCE…KERL and EKLL…ITSE.

Belongs to the BRMS1 family.

It localises to the nucleus. Involved in the histone deacetylase (HDAC1)-dependent transcriptional repression activity. The polypeptide is Breast cancer metastasis-suppressor 1-like protein (brms1l) (Xenopus tropicalis (Western clawed frog)).